Consider the following 326-residue polypeptide: MAMTAAVKDELSRVDVPKPCCRRAEMAALLRFAGGLHIVSGRVVVEAELDTGAVARRLRREIAEVYGYPSEIHVLASGGLRKGSHFIVRVVKDGEFLARQTGLLDVRGRPVRGLPPHVVAANVCCAVSAWRGAFMAHGSLTEPGRSSAMEITCPGPESALALVGAARRIGIAAKNREVRGVDRVVVKDGDAIAALLTRIGAHASVLAWEERRVRREVRATANRLANFDDANLRRSARAAVAAAARVTRALEILADDAPHHLTSAGRLRLEHRQASLEELGALADPPLTKDAIAGRIRRLLALADKRARDLGIPDTEAAVTPDMLVV.

A DNA-binding region (H-T-H motif) is located at residues 275–308 (SLEELGALADPPLTKDAIAGRIRRLLALADKRAR).

The protein belongs to the WhiA family.

In terms of biological role, involved in cell division and chromosome segregation. The protein is Probable cell division protein WhiA of Salinispora tropica (strain ATCC BAA-916 / DSM 44818 / JCM 13857 / NBRC 105044 / CNB-440).